A 294-amino-acid chain; its full sequence is MFKGSIPALVTPFTAAGSVDADSFVAHVEWQIKEGSHGLVPVGTTGESPTLSHDEHKKVVELCVEASARRVPVIAGAGSNNTIEAIELAQHAEKAGADAILVVTPYYNKPTQKGLFAHFAAIAESVKLPIVIYNIPGRSVVDMSVETMAALAKAHPTIVGVKDATGRIERVSEQRMACGKAFVQLSGEDATALGFNAHGGVGCISVTANVAPRLCAEFQEATLAGNYAKALELQDKLMPLHKAIFLEPGVCGAKYALNRLGRMSFTVRSPLLSALEPATASAIDAALRHAGLMN.

A pyruvate-binding site is contributed by threonine 45. Tyrosine 133 (proton donor/acceptor) is an active-site residue. Lysine 162 acts as the Schiff-base intermediate with substrate in catalysis. Isoleucine 204 contacts pyruvate.

The protein belongs to the DapA family. In terms of assembly, homotetramer; dimer of dimers.

Its subcellular location is the cytoplasm. It catalyses the reaction L-aspartate 4-semialdehyde + pyruvate = (2S,4S)-4-hydroxy-2,3,4,5-tetrahydrodipicolinate + H2O + H(+). It functions in the pathway amino-acid biosynthesis; L-lysine biosynthesis via DAP pathway; (S)-tetrahydrodipicolinate from L-aspartate: step 3/4. In terms of biological role, catalyzes the condensation of (S)-aspartate-beta-semialdehyde [(S)-ASA] and pyruvate to 4-hydroxy-tetrahydrodipicolinate (HTPA). This is 4-hydroxy-tetrahydrodipicolinate synthase from Rhizobium meliloti (strain 1021) (Ensifer meliloti).